We begin with the raw amino-acid sequence, 131 residues long: Pancreatic polypeptide prohormone (131 aa).

The signal sequence occupies residues 1-29 (MAAAHRCLFLLLLSTCVALLLQPPLGALG). The residue at position 65 (Tyr-65) is a Tyrosine amide.

This sequence belongs to the NPY family.

The protein localises to the secreted. Functionally, hormone secreted by pancreatic cells that acts as a regulator of pancreatic and gastrointestinal functions probably by signaling through the G protein-coupled receptor NPY4R2. In Bos taurus (Bovine), this protein is Pancreatic polypeptide prohormone (PPY).